A 562-amino-acid chain; its full sequence is IRK-interacting protein (562 aa).

Disordered stretches follow at residues 29–61 and 303–322; these read ASLMQMKSSPSSNYSLRNPSSSSAASPASRPLP and VVSQENSGGRSSGKKNSEMP. Residues 36 to 61 are compositionally biased toward low complexity; sequence SSPSSNYSLRNPSSSSAASPASRPLP. The stretch at 246 to 306 forms a coiled coil; that stretch reads SGVEKLKREL…LREATEVVSQ (61 aa).

As to quaternary structure, interacts with IRK. In terms of tissue distribution, highly expressed in root tips, shoot apices and developing flowers.

This Arabidopsis thaliana (Mouse-ear cress) protein is IRK-interacting protein.